Reading from the N-terminus, the 364-residue chain is Dual-specificity RNA methyltransferase RlmN (364 aa).

The active-site Proton acceptor is glutamate 93. The Radical SAM core domain maps to 99-337; sequence EDDRGTLCIS…ATIRKTRGDD (239 aa). Cysteines 106 and 342 form a disulfide. [4Fe-4S] cluster-binding residues include cysteine 113, cysteine 117, and cysteine 120. S-adenosyl-L-methionine-binding positions include 167–168, serine 199, 221–223, and asparagine 299; these read GE and SLH. The active-site S-methylcysteine intermediate is the cysteine 342.

Belongs to the radical SAM superfamily. RlmN family. It depends on [4Fe-4S] cluster as a cofactor.

It localises to the cytoplasm. It catalyses the reaction adenosine(2503) in 23S rRNA + 2 reduced [2Fe-2S]-[ferredoxin] + 2 S-adenosyl-L-methionine = 2-methyladenosine(2503) in 23S rRNA + 5'-deoxyadenosine + L-methionine + 2 oxidized [2Fe-2S]-[ferredoxin] + S-adenosyl-L-homocysteine. The catalysed reaction is adenosine(37) in tRNA + 2 reduced [2Fe-2S]-[ferredoxin] + 2 S-adenosyl-L-methionine = 2-methyladenosine(37) in tRNA + 5'-deoxyadenosine + L-methionine + 2 oxidized [2Fe-2S]-[ferredoxin] + S-adenosyl-L-homocysteine. Functionally, specifically methylates position 2 of adenine 2503 in 23S rRNA and position 2 of adenine 37 in tRNAs. m2A2503 modification seems to play a crucial role in the proofreading step occurring at the peptidyl transferase center and thus would serve to optimize ribosomal fidelity. The protein is Dual-specificity RNA methyltransferase RlmN of Dichelobacter nodosus (strain VCS1703A).